A 129-amino-acid chain; its full sequence is ALK and LTK ligand 1 (129 aa).

Residues 1–27 (MRPLKPGAPLPALFLLALALSPHGAHG) form the signal peptide. The disordered stretch occupies residues 24–63 (GAHGRPRGRRGARVTDKEPKPLLFLPAAGAGRTPSGSRSA). The segment covering 25 to 35 (AHGRPRGRRGA) has biased composition (basic residues). 2 disulfides stabilise this stretch: C90/C126 and C104/C113.

The protein belongs to the ALKAL family. Widely expressed with highest levels in thyroid and moderate levels in stomach, trachea, small intestine, prostate and brain.

The protein localises to the secreted. It localises to the cell membrane. In terms of biological role, cytokine that acts as a physiological ligand for receptor tyrosine kinase LTK, leading to its activation. Monomeric ALKAL1 binds to LTK, leading to LTK homodimerization and activation. In contrast to ALKAL2, does not act as a potent physiological ligand for ALK. The polypeptide is ALK and LTK ligand 1 (Homo sapiens (Human)).